The sequence spans 2290 residues: Protein Ycf2 (2290 aa).

1638–1645 (GSIGTGRS) serves as a coordination point for ATP.

The protein belongs to the Ycf2 family.

The protein resides in the plastid. It is found in the chloroplast stroma. Functionally, probable ATPase of unknown function. Its presence in a non-photosynthetic plant (Epifagus virginiana) and experiments in tobacco indicate that it has an essential function which is probably not related to photosynthesis. The sequence is that of Protein Ycf2 from Phalaenopsis aphrodite subsp. formosana (Moth orchid).